Consider the following 218-residue polypeptide: Cytidylate kinase (218 aa).

7-15 (GPSASGKSS) lines the ATP pocket.

It belongs to the cytidylate kinase family. Type 1 subfamily.

Its subcellular location is the cytoplasm. It carries out the reaction CMP + ATP = CDP + ADP. It catalyses the reaction dCMP + ATP = dCDP + ADP. This chain is Cytidylate kinase, found in Borrelia hermsii (strain HS1 / DAH).